Reading from the N-terminus, the 552-residue chain is Protein FAM234A (552 aa).

Topologically, residues 1–48 are cytoplasmic; the sequence is MTDGKDLEAEIHPLKSENRKVPENAGALAGKEPRGTPAPQTRLSHCRT. The helical; Signal-anchor for type II membrane protein transmembrane segment at 49–69 threads the bilayer; the sequence is AAFFLSLFACLLVVFVVSFII. Residues 70 to 552 lie on the Extracellular side of the membrane; the sequence is PCPDRPALQG…LSRLRYRSEA (483 aa). N-linked (GlcNAc...) asparagine glycans are attached at residues N115, N238, and N473.

Belongs to the FAM234 family.

Its subcellular location is the membrane. This Bos taurus (Bovine) protein is Protein FAM234A (FAM234A).